The sequence spans 417 residues: Aminoacyltransferase FemB (417 aa).

It belongs to the FemABX family.

The protein localises to the cytoplasm. It catalyses the reaction MurNAc-L-Ala-D-isoglutaminyl-L-Lys-(N(6)-tri-Gly)-D-Ala-D-Ala-diphospho-di-trans,octa-cis-undecaprenyl-GlcNAc + 2 glycyl-tRNA(Gly) = MurNAc-L-Ala-D-isoglutaminyl-L-Lys-(N(6)-penta-Gly)-D-Ala-D-Ala-diphospho-di-trans,octa-cis-undecaprenyl-GlcNAc + 2 tRNA(Gly) + 2 H(+). In terms of biological role, catalyzes the incorporation of amino acid(s) into the interchain peptide bridge of peptidoglycan, using aminoacyl-tRNA as amino acid donor. This Staphylococcus epidermidis protein is Aminoacyltransferase FemB (femB).